Here is a 118-residue protein sequence, read N- to C-terminus: MSIKYSNKINKIRTFALSLVFIGLFIAYLGVFFRENIIVMTTFMMVGFLAVIASTVVYFWIGMLSTKTIQIICPSCDKPTKMLGRVDACMHCNQPLTLDRDLEGKEFDEKYNKKSYKS.

The next 2 helical transmembrane spans lie at 12–32 and 43–63; these read IRTF…LGVF and FMMV…WIGM.

The protein belongs to the UPF0295 family.

It localises to the cell membrane. This is UPF0295 protein BCG9842_B4782 from Bacillus cereus (strain G9842).